A 145-amino-acid chain; its full sequence is D-aminoacyl-tRNA deacylase (145 aa).

The short motif at 137-138 is the Gly-cisPro motif, important for rejection of L-amino acids element; that stretch reads GP.

Belongs to the DTD family. As to quaternary structure, homodimer.

It is found in the cytoplasm. The catalysed reaction is glycyl-tRNA(Ala) + H2O = tRNA(Ala) + glycine + H(+). It catalyses the reaction a D-aminoacyl-tRNA + H2O = a tRNA + a D-alpha-amino acid + H(+). In terms of biological role, an aminoacyl-tRNA editing enzyme that deacylates mischarged D-aminoacyl-tRNAs. Also deacylates mischarged glycyl-tRNA(Ala), protecting cells against glycine mischarging by AlaRS. Acts via tRNA-based rather than protein-based catalysis; rejects L-amino acids rather than detecting D-amino acids in the active site. By recycling D-aminoacyl-tRNA to D-amino acids and free tRNA molecules, this enzyme counteracts the toxicity associated with the formation of D-aminoacyl-tRNA entities in vivo and helps enforce protein L-homochirality. This is D-aminoacyl-tRNA deacylase from Chromohalobacter salexigens (strain ATCC BAA-138 / DSM 3043 / CIP 106854 / NCIMB 13768 / 1H11).